The sequence spans 182 residues: ATP synthase subunit b, chloroplastic (182 aa).

The helical transmembrane segment at 33–55 (VLNIMLLLFGLIYVLKQFLGSLL) threads the bilayer.

The protein belongs to the ATPase B chain family. As to quaternary structure, F-type ATPases have 2 components, F(1) - the catalytic core - and F(0) - the membrane proton channel. F(1) has five subunits: alpha(3), beta(3), gamma(1), delta(1), epsilon(1). F(0) has four main subunits: a(1), b(1), b'(1) and c(10-14). The alpha and beta chains form an alternating ring which encloses part of the gamma chain. F(1) is attached to F(0) by a central stalk formed by the gamma and epsilon chains, while a peripheral stalk is formed by the delta, b and b' chains.

It is found in the plastid. It localises to the chloroplast thylakoid membrane. Functionally, f(1)F(0) ATP synthase produces ATP from ADP in the presence of a proton or sodium gradient. F-type ATPases consist of two structural domains, F(1) containing the extramembraneous catalytic core and F(0) containing the membrane proton channel, linked together by a central stalk and a peripheral stalk. During catalysis, ATP synthesis in the catalytic domain of F(1) is coupled via a rotary mechanism of the central stalk subunits to proton translocation. In terms of biological role, component of the F(0) channel, it forms part of the peripheral stalk, linking F(1) to F(0). The polypeptide is ATP synthase subunit b, chloroplastic (Antithamnion sp. (Red alga)).